The primary structure comprises 224 residues: Small ribosomal subunit protein uS7 (224 aa).

It belongs to the universal ribosomal protein uS7 family. Part of the 30S ribosomal subunit.

Its function is as follows. One of the primary rRNA binding proteins, it binds directly to 16S rRNA where it nucleates assembly of the head domain of the 30S subunit. Is located at the subunit interface close to the decoding center. This chain is Small ribosomal subunit protein uS7, found in Caldivirga maquilingensis (strain ATCC 700844 / DSM 13496 / JCM 10307 / IC-167).